We begin with the raw amino-acid sequence, 158 residues long: SsrA-binding protein (158 aa).

Residues 131–158 (KQLHDKRQTEKERDWNKQKQRILQTNQR) form a disordered region. Residues 132 to 147 (QLHDKRQTEKERDWNK) are compositionally biased toward basic and acidic residues.

Belongs to the SmpB family.

The protein resides in the cytoplasm. Functionally, required for rescue of stalled ribosomes mediated by trans-translation. Binds to transfer-messenger RNA (tmRNA), required for stable association of tmRNA with ribosomes. tmRNA and SmpB together mimic tRNA shape, replacing the anticodon stem-loop with SmpB. tmRNA is encoded by the ssrA gene; the 2 termini fold to resemble tRNA(Ala) and it encodes a 'tag peptide', a short internal open reading frame. During trans-translation Ala-aminoacylated tmRNA acts like a tRNA, entering the A-site of stalled ribosomes, displacing the stalled mRNA. The ribosome then switches to translate the ORF on the tmRNA; the nascent peptide is terminated with the 'tag peptide' encoded by the tmRNA and targeted for degradation. The ribosome is freed to recommence translation, which seems to be the essential function of trans-translation. This is SsrA-binding protein from Teredinibacter turnerae (strain ATCC 39867 / T7901).